Consider the following 113-residue polypeptide: uncharacterized protein (113 aa).

The HTH hxlR-type domain maps to 16 to 113 (TPFGYTLSLI…CEWGVKNQNN (98 aa)).

This is an uncharacterized protein from Halalkalibacterium halodurans (strain ATCC BAA-125 / DSM 18197 / FERM 7344 / JCM 9153 / C-125) (Bacillus halodurans).